A 506-amino-acid polypeptide reads, in one-letter code: Maturase K (506 aa).

It belongs to the intron maturase 2 family. MatK subfamily.

The protein localises to the plastid. The protein resides in the chloroplast. Its function is as follows. Usually encoded in the trnK tRNA gene intron. Probably assists in splicing its own and other chloroplast group II introns. The sequence is that of Maturase K from Crataegus monogyna (Hawthorn).